A 129-amino-acid polypeptide reads, in one-letter code: Glycine cleavage system H protein (129 aa).

Positions 24–106 (LLKIGVSEFA…IGNGWLLIIK (83 aa)) constitute a Lipoyl-binding domain. The residue at position 65 (Lys-65) is an N6-lipoyllysine.

The protein belongs to the GcvH family. In terms of assembly, the glycine cleavage system is composed of four proteins: P, T, L and H. (R)-lipoate serves as cofactor.

The glycine cleavage system catalyzes the degradation of glycine. The H protein shuttles the methylamine group of glycine from the P protein to the T protein. The polypeptide is Glycine cleavage system H protein (Prochlorococcus marinus (strain MIT 9515)).